We begin with the raw amino-acid sequence, 601 residues long: DNA replication licensing factor MCM3 (601 aa).

The region spanning 180 to 386 (PINLLSKSIA…LDRRLSQHVL (207 aa)) is the MCM domain. 229 to 236 (GDPSTAKS) is a binding site for ATP. The short motif at 361–364 (SRFD) is the Arginine finger element.

It belongs to the MCM family. In terms of assembly, component of the MCM2-7 complex.

It is found in the nucleus. The protein localises to the chromosome. Its subcellular location is the nucleoplasm. It catalyses the reaction ATP + H2O = ADP + phosphate + H(+). Functionally, acts as a component of the MCM2-7 complex (MCM complex) which is the replicative helicase essential for DNA replication initiation and elongation in eukaryotic cells. Required for DNA replication and cell proliferation. The active ATPase sites in the MCM2-7 ring are formed through the interaction surfaces of two neighboring subunits such that a critical structure of a conserved arginine finger motif is provided in trans relative to the ATP-binding site of the Walker A box of the adjacent subunit. This chain is DNA replication licensing factor MCM3, found in Entamoeba histolytica (strain ATCC 30459 / HM-1:IMSS / ABRM).